A 119-amino-acid chain; its full sequence is Beta-2-microglobulin (119 aa).

Positions 1–20 (MARFVVVALLVLLSVSDLEA) are cleaved as a signal peptide. Residues 25–114 (PKIQVYSRYP…VTFLTPKTVK (90 aa)) enclose the Ig-like C1-type domain. Cys-45 and Cys-100 are disulfide-bonded.

It belongs to the beta-2-microglobulin family. As to quaternary structure, heterodimer of an alpha chain and a beta chain. Beta-2-microglobulin is the beta-chain of major histocompatibility complex class I molecules.

Its subcellular location is the secreted. Component of the class I major histocompatibility complex (MHC). Involved in the presentation of peptide antigens to the immune system. This Leontocebus fuscicollis (Brown-mantled tamarin) protein is Beta-2-microglobulin (B2M).